We begin with the raw amino-acid sequence, 290 residues long: ATP synthase gamma chain (290 aa).

This sequence belongs to the ATPase gamma chain family. F-type ATPases have 2 components, CF(1) - the catalytic core - and CF(0) - the membrane proton channel. CF(1) has five subunits: alpha(3), beta(3), gamma(1), delta(1), epsilon(1). CF(0) has three main subunits: a, b and c.

It localises to the cell membrane. Produces ATP from ADP in the presence of a proton gradient across the membrane. The gamma chain is believed to be important in regulating ATPase activity and the flow of protons through the CF(0) complex. This chain is ATP synthase gamma chain, found in Buchnera aphidicola subsp. Schlechtendalia chinensis.